The chain runs to 652 residues: Sodium-dependent phosphate transporter 1-A (652 aa).

Residues methionine 1–aspartate 25 lie on the Cytoplasmic side of the membrane. A helical membrane pass occupies residues valine 26–alanine 46. The Extracellular segment spans residues asparagine 47–glutamine 66. A helical transmembrane segment spans residues alanine 67–serine 87. The Cytoplasmic portion of the chain corresponds to glutamate 88–glutamate 104. A helical membrane pass occupies residues alanine 105–alanine 125. Topologically, residues serine 126–arginine 162 are extracellular. The helical transmembrane segment at isoleucine 163–tyrosine 183 threads the bilayer. The Cytoplasmic portion of the chain corresponds to phenylalanine 184–arginine 201. Residues alanine 202–glycine 222 form a helical membrane-spanning segment. Over alanine 223–tryptophan 234 the chain is Extracellular. A helical membrane pass occupies residues glycine 235–valine 255. The Cytoplasmic portion of the chain corresponds to cysteine 256–glutamate 482. The tract at residues threonine 278 to proline 308 is disordered. Residues valine 281–proline 295 are compositionally biased toward basic and acidic residues. The span at proline 297–proline 308 shows a compositional bias: pro residues. The chain crosses the membrane as a helical span at residues valine 483 to glycine 503. The Extracellular portion of the chain corresponds to glycine 504–proline 531. Residues threonine 532 to glycine 552 traverse the membrane as a helical segment. Residues arginine 553–glycine 571 are Cytoplasmic-facing. The chain crosses the membrane as a helical span at residues phenylalanine 572 to valine 592. Residues serine 593–asparagine 621 are Extracellular-facing. The helical transmembrane segment at isoleucine 622–alanine 642 threads the bilayer. The Cytoplasmic portion of the chain corresponds to leucine 643–threonine 652.

This sequence belongs to the inorganic phosphate transporter (PiT) (TC 2.A.20) family.

The protein resides in the membrane. Its function is as follows. Sodium-phosphate symporter which plays a fundamental housekeeping role in phosphate transport. The polypeptide is Sodium-dependent phosphate transporter 1-A (slc20a1a) (Danio rerio (Zebrafish)).